We begin with the raw amino-acid sequence, 512 residues long: Ankyrin repeat domain-containing protein SOWAHC (512 aa).

Residues Ser82 and Ser125 each carry the phosphoserine modification. Residues 126 to 248 (LGLGGEVSDQ…AEEESSVGAS (123 aa)) form a disordered region. The segment covering 173–186 (PPQGEAEGGSSPSG) has biased composition (low complexity). Residue Ser205 is modified to Phosphoserine. Residues 214-228 (PGDGNAGGRSRGGGD) show a composition bias toward gly residues. Low complexity predominate over residues 229–248 (SDTASLASSSAEEESSVGAS). ANK repeat units follow at residues 288–317 (TGFT…KHQL) and 327–357 (GGYT…DVDI). Arg395 carries the post-translational modification Omega-N-methylarginine. The interval 427-500 (HVPEGWTGGS…EERSLRGYSS (74 aa)) is disordered. Positions 453 to 462 (MKPRLNKIRF) are enriched in basic residues. The span at 481–492 (EEGEEEEEEEEE) shows a compositional bias: acidic residues.

The protein belongs to the SOWAH family.

This chain is Ankyrin repeat domain-containing protein SOWAHC (Sowahc), found in Mus musculus (Mouse).